Reading from the N-terminus, the 210-residue chain is Putative RING-H2 finger protein ATL50 (210 aa).

The helical transmembrane segment at 35 to 55 (IVLLYITLLSIIFFVAALIHL) threads the bilayer. The RING-type; atypical zinc-finger motif lies at 122 to 164 (CAVCLREFTAEDELRLLPKCSHAFHVECIDTWLLTNSTCPLCR). Residues 187–210 (SDGDNSQDSDSSFMLTDLDDVESK) form a disordered region.

The protein belongs to the RING-type zinc finger family. ATL subfamily.

The protein resides in the membrane. The enzyme catalyses S-ubiquitinyl-[E2 ubiquitin-conjugating enzyme]-L-cysteine + [acceptor protein]-L-lysine = [E2 ubiquitin-conjugating enzyme]-L-cysteine + N(6)-ubiquitinyl-[acceptor protein]-L-lysine.. Its pathway is protein modification; protein ubiquitination. The polypeptide is Putative RING-H2 finger protein ATL50 (ATL50) (Arabidopsis thaliana (Mouse-ear cress)).